We begin with the raw amino-acid sequence, 126 residues long: S-adenosylmethionine decarboxylase proenzyme (126 aa).

Ser63 acts as the Schiff-base intermediate with substrate; via pyruvic acid in catalysis. Ser63 bears the Pyruvic acid (Ser); by autocatalysis mark. His68 functions as the Proton acceptor; for processing activity in the catalytic mechanism. The active-site Proton donor; for catalytic activity is Cys83.

Belongs to the prokaryotic AdoMetDC family. Type 1 subfamily. Heterotetramer of two alpha and two beta chains arranged as a dimer of alpha/beta heterodimers. The cofactor is pyruvate. Post-translationally, is synthesized initially as an inactive proenzyme. Formation of the active enzyme involves a self-maturation process in which the active site pyruvoyl group is generated from an internal serine residue via an autocatalytic post-translational modification. Two non-identical subunits are generated from the proenzyme in this reaction, and the pyruvate is formed at the N-terminus of the alpha chain, which is derived from the carboxyl end of the proenzyme. The post-translation cleavage follows an unusual pathway, termed non-hydrolytic serinolysis, in which the side chain hydroxyl group of the serine supplies its oxygen atom to form the C-terminus of the beta chain, while the remainder of the serine residue undergoes an oxidative deamination to produce ammonia and the pyruvoyl group blocking the N-terminus of the alpha chain.

The enzyme catalyses S-adenosyl-L-methionine + H(+) = S-adenosyl 3-(methylsulfanyl)propylamine + CO2. The protein operates within amine and polyamine biosynthesis; S-adenosylmethioninamine biosynthesis; S-adenosylmethioninamine from S-adenosyl-L-methionine: step 1/1. Catalyzes the decarboxylation of S-adenosylmethionine to S-adenosylmethioninamine (dcAdoMet), the propylamine donor required for the synthesis of the polyamines spermine and spermidine from the diamine putrescine. This chain is S-adenosylmethionine decarboxylase proenzyme, found in Oceanobacillus iheyensis (strain DSM 14371 / CIP 107618 / JCM 11309 / KCTC 3954 / HTE831).